Consider the following 82-residue polypeptide: Putative membrane protein insertion efficiency factor (82 aa).

This sequence belongs to the UPF0161 family.

The protein localises to the cell inner membrane. Its function is as follows. Could be involved in insertion of integral membrane proteins into the membrane. The protein is Putative membrane protein insertion efficiency factor of Aeromonas salmonicida (strain A449).